Consider the following 642-residue polypeptide: Polyglycine hydrolase (642 aa).

The signal sequence occupies residues 1 to 23; sequence MYTSRLLLSNLASCLSLATLVAS. 4 N-linked (GlcNAc...) asparagine glycosylation sites follow: asparagine 37, asparagine 100, asparagine 159, and asparagine 341. Cysteine 149 and cysteine 183 are oxidised to a cystine. Residue serine 370 is part of the active site. Asparagine 390, asparagine 407, asparagine 444, asparagine 487, and asparagine 494 each carry an N-linked (GlcNAc...) asparagine glycan.

Belongs to the peptidase S12 family.

It is found in the secreted. The enzyme catalyses a glycyl-glycyl-[protein] + H2O = N-terminal glycyl-[protein] + [protein]-C-terminal glycine. With respect to regulation, not inhibited by phenylmethylsulfonyl fluoride (PMSF; serine peptidase class S1 inhibitor), clavulanic acid (beta-lactamase inhibitor) or ampicillin (penicillin-binding protein (PBP) inhibitor). In terms of biological role, serine-type endopeptidase that cleaves Gly-Gly bonds in the polyglycine linker of host plant class IV chitinases to disrupt their chitin-binding, and thereby plays a role in lowering the defense responses of the host to the fungus. Degrades Z.mays Endochitinase A (CHIA). Degrades Z.mays Endochitinase B (CHIB). Has no activity on Z.mays CHIA following CHIA cleavage by fungalysin. The protein is Polyglycine hydrolase of Epicoccum sorghinum (Endophyte fungus).